Reading from the N-terminus, the 221-residue chain is uncharacterized protein (221 aa).

An N-terminal signal peptide occupies residues 1–26; the sequence is MVRLVPRAFAATVALLAAGFSPATAS.

This is an uncharacterized protein from Mycobacterium tuberculosis (strain CDC 1551 / Oshkosh).